A 270-amino-acid chain; its full sequence is uncharacterized protein (270 aa).

An N-terminal signal peptide occupies residues 1 to 22 (MEYIKKIALYMSVLLLIIFIGG). Cysteine 23 carries the N-palmitoyl cysteine lipid modification. Cysteine 23 is lipidated: S-diacylglycerol cysteine.

This sequence belongs to the staphylococcal tandem lipoprotein family.

The protein localises to the cell membrane. This is an uncharacterized protein from Staphylococcus aureus (strain NCTC 8325 / PS 47).